Reading from the N-terminus, the 144-residue chain is Large ribosomal subunit protein uL15 (144 aa).

Residues 1-51 form a disordered region; sequence MELNSIKPGSGSKHAKRRVGRGIGSGLGKTAGRGHKGQKSRAGGYHKVGFE. Residues 21-31 are compositionally biased toward gly residues; sequence RGIGSGLGKTA.

Belongs to the universal ribosomal protein uL15 family. As to quaternary structure, part of the 50S ribosomal subunit.

Its function is as follows. Binds to the 23S rRNA. The sequence is that of Large ribosomal subunit protein uL15 from Leptothrix cholodnii (strain ATCC 51168 / LMG 8142 / SP-6) (Leptothrix discophora (strain SP-6)).